Consider the following 386-residue polypeptide: Tumor necrosis factor receptor superfamily member 10D (386 aa).

Disordered regions lie at residues 1–25 and 62–90; these read MGLWGQSVPTASSARAGRYPGARTA and DEVPQQTVAPQQQRRSLKEEECPAGSHRS. The N-terminal stretch at 1-55 is a signal peptide; it reads MGLWGQSVPTASSARAGRYPGARTASGTRPWLLDPKILKFVVFIVAVLLPVRVDS. Residues 56–211 are Extracellular-facing; it reads ATIPRQDEVP…ILGMLASPYH (156 aa). TNFR-Cys repeat units lie at residues 58–97, 98–139, and 140–180; these read IPRQDEVPQQTVAPQQQRRSLKEEECPAGSHRSEYTGACN, PCTE…DTVC, and QCEK…DIKC. A compositionally biased stretch (polar residues) spans 64-75; that stretch reads VPQQTVAPQQQR. 7 cysteine pairs are disulfide-bonded: cysteine 83–cysteine 96, cysteine 99–cysteine 115, cysteine 118–cysteine 131, cysteine 121–cysteine 139, cysteine 141–cysteine 155, cysteine 158–cysteine 172, and cysteine 162–cysteine 180. An N-linked (GlcNAc...) asparagine glycan is attached at asparagine 127. An N-linked (GlcNAc...) asparagine glycan is attached at asparagine 182. The chain crosses the membrane as a helical span at residues 212–232; it reads YLIIIVVLVIILAVVVVGFSC. Topologically, residues 233–386 are cytoplasmic; it reads RKKFISYLKG…DEAGSATSCL (154 aa). A Death; truncated domain is found at 340–366; that stretch reads SADISTLLDASATLEEGHAKETIQDQL.

In terms of tissue distribution, widely expressed, in particular in fetal kidney, lung and liver, and in adult testis and liver. Also expressed in peripheral blood leukocytes, colon and small intestine, ovary, prostate, thymus, spleen, pancreas, kidney, lung, placenta and heart.

The protein localises to the membrane. Its function is as follows. Receptor for the cytotoxic ligand TRAIL. Contains a truncated death domain and hence is not capable of inducing apoptosis but protects against TRAIL-mediated apoptosis. Reports are contradictory with regards to its ability to induce the NF-kappa-B pathway. According to PubMed:9382840, it cannot but according to PubMed:9430226, it can induce the NF-kappa-B pathway. The sequence is that of Tumor necrosis factor receptor superfamily member 10D from Homo sapiens (Human).